Reading from the N-terminus, the 149-residue chain is Nucleoside diphosphate kinase (149 aa).

6 residues coordinate ATP: lysine 9, phenylalanine 57, arginine 85, threonine 91, arginine 102, and asparagine 112. Residue histidine 115 is the Pros-phosphohistidine intermediate of the active site.

It belongs to the NDK family. Homotetramer. Mg(2+) serves as cofactor.

The protein resides in the cytoplasm. The enzyme catalyses a 2'-deoxyribonucleoside 5'-diphosphate + ATP = a 2'-deoxyribonucleoside 5'-triphosphate + ADP. It catalyses the reaction a ribonucleoside 5'-diphosphate + ATP = a ribonucleoside 5'-triphosphate + ADP. In terms of biological role, major role in the synthesis of nucleoside triphosphates other than ATP. The ATP gamma phosphate is transferred to the NDP beta phosphate via a ping-pong mechanism, using a phosphorylated active-site intermediate. The protein is Nucleoside diphosphate kinase of Nostoc punctiforme (strain ATCC 29133 / PCC 73102).